The chain runs to 69 residues: U2-agatoxin-Ao1g (69 aa).

An N-terminal signal peptide occupies residues 1-20; the sequence is MKAIISLLLISAMVFSMIEA. Positions 21–34 are excised as a propeptide; sequence VPVEEGLQLFEGER. Disulfide bonds link Cys36-Cys52, Cys43-Cys57, and Cys51-Cys67. At Leu68 the chain carries Leucine amide.

This sequence belongs to the neurotoxin 01 (U2-agtx) family. Expressed by the venom gland.

It localises to the secreted. Its function is as follows. Insect active toxin causing rapid but reversible paralysis in crickets. No activity shown in mammals. Does not show effect on mammalian voltage-gated calcium channels. The protein is U2-agatoxin-Ao1g of Agelena orientalis (Funnel-web spider).